The following is a 298-amino-acid chain: Inosose dehydratase 2 (298 aa).

The protein belongs to the IolE/MocC family. It depends on glutathione as a cofactor. Requires Co(2+) as cofactor. The cofactor is Mn(2+).

It carries out the reaction scyllo-inosose = 3D-3,5/4-trihydroxycyclohexane-1,2-dione + H2O. It functions in the pathway polyol metabolism; myo-inositol degradation into acetyl-CoA; acetyl-CoA from myo-inositol: step 2/7. Functionally, catalyzes the dehydration of inosose (2-keto-myo-inositol, 2KMI or 2,4,6/3,5-pentahydroxycyclohexanone) to 3D-(3,5/4)-trihydroxycyclohexane-1,2-dione (D-2,3-diketo-4-deoxy-epi-inositol). This chain is Inosose dehydratase 2, found in Bacillus cereus (strain ZK / E33L).